The primary structure comprises 241 residues: Sugar fermentation stimulation protein homolog (241 aa).

It belongs to the SfsA family.

The protein is Sugar fermentation stimulation protein homolog of Thermosynechococcus vestitus (strain NIES-2133 / IAM M-273 / BP-1).